A 906-amino-acid chain; its full sequence is DNA mismatch repair protein MutS (906 aa).

656–663 (GPNMAGKS) contributes to the ATP binding site.

The protein belongs to the DNA mismatch repair MutS family.

This protein is involved in the repair of mismatches in DNA. It is possible that it carries out the mismatch recognition step. This protein has a weak ATPase activity. The chain is DNA mismatch repair protein MutS from Rhodopseudomonas palustris (strain BisA53).